A 510-amino-acid chain; its full sequence is Major facilitator superfamily domain-containing protein 8 (510 aa).

The Cytoplasmic segment spans residues 1–38; sequence MASIDDDDDERTPLLQDSHIGELVETQKQLKSRWWSIR. The Dileucine internalization motif signature appears at 14–15; sequence LL. Residues 39–59 traverse the membrane as a helical segment; the sequence is VMYLTMFLSSVGFSIVMTSIW. At 60-72 the chain is on the extracellular side; the sequence is PYLQKVDQSADAS. Residues 73 to 93 traverse the membrane as a helical segment; it reads FLGWVIASFSLGQMVASPLFG. Residues 94–103 are Cytoplasmic-facing; that stretch reads LWSNHRPRRE. A helical membrane pass occupies residues 104–124; the sequence is PLVVSITILVAASCLYAYVHV. The Extracellular portion of the chain corresponds to 125-132; the sequence is PASHNKYY. The helical transmembrane segment at 133-155 threads the bilayer; the sequence is MLLARTFVGFGSGNVAVVRSYVA. At 156–171 the chain is on the cytoplasmic side; it reads GATSLSERTGAMANIS. The chain crosses the membrane as a helical span at residues 172–192; it reads AFQAMGFILGPAFQAALSVIG. Residues 193–209 lie on the Extracellular side of the membrane; that stretch reads ETGITINGISLQVNMYT. Residues 210 to 230 traverse the membrane as a helical segment; that stretch reads APALMGALLGIGNIILIFAIF. Residues 231–264 lie on the Cytoplasmic side of the membrane; it reads REHRVDDLEKNVSSINSESEVTDVEKANEGPIDQ. The chain crosses the membrane as a helical span at residues 265-285; it reads IAVISSNILFFVVLFVFAIFE. The Extracellular portion of the chain corresponds to 286–302; that stretch reads TISTPLTMDMYAWTRTQ. Residues 303–323 traverse the membrane as a helical segment; that stretch reads AVFYNGIILAAVGVESVIVFL. Over 324 to 335 the chain is Cytoplasmic; sequence TVKILCKKTGER. The helical transmembrane segment at 336-356 threads the bilayer; sequence VLLLGGLAVIWIGFFILLPWG. The Extracellular segment spans residues 357 to 406; sequence NQMPKIQWTDLQNATIHNTTQWTSSIPSSGNHSVEPTGCPVIQTWCLYTP. N369 and N374 each carry an N-linked (GlcNAc...) asparagine glycan. Residues 407 to 427 traverse the membrane as a helical segment; that stretch reads VIHLAQYLTSDILIGVGYPIC. At 428-445 the chain is on the cytoplasmic side; that stretch reads NVMSYTLYSKIIGPKPQG. The chain crosses the membrane as a helical span at residues 446 to 466; it reads LYMGWLTAAGSAARTLGPVFV. Residues 467 to 476 are Extracellular-facing; it reads SQIYTHLGTR. The chain crosses the membrane as a helical span at residues 477-497; sequence WTFGIICAFVALSLLHLTAVY. The Cytoplasmic segment spans residues 498 to 510; it reads KRLIPFSTRYERL.

It belongs to the major facilitator superfamily.

The protein localises to the lysosome membrane. Its function is as follows. May be a carrier that transport small solutes by using chemiosmotic ion gradients. This Xenopus laevis (African clawed frog) protein is Major facilitator superfamily domain-containing protein 8 (mfsd8).